Reading from the N-terminus, the 201-residue chain is Large ribosomal subunit protein uL4 (201 aa).

The disordered stretch occupies residues 43 to 73; sequence SRGQKTRAEVTGSGKKPWRQKGTGRARSGSV.

This sequence belongs to the universal ribosomal protein uL4 family. In terms of assembly, part of the 50S ribosomal subunit.

Functionally, one of the primary rRNA binding proteins, this protein initially binds near the 5'-end of the 23S rRNA. It is important during the early stages of 50S assembly. It makes multiple contacts with different domains of the 23S rRNA in the assembled 50S subunit and ribosome. In terms of biological role, forms part of the polypeptide exit tunnel. The protein is Large ribosomal subunit protein uL4 of Sodalis glossinidius (strain morsitans).